Reading from the N-terminus, the 246-residue chain is Small ribosomal subunit protein uS2 (246 aa).

The protein belongs to the universal ribosomal protein uS2 family.

This chain is Small ribosomal subunit protein uS2, found in Pseudomonas aeruginosa (strain LESB58).